The primary structure comprises 685 residues: Linoleate 9/13-lipoxygenase (685 aa).

The first 19 residues, M1–A19, serve as a signal peptide directing secretion. The 564-residue stretch at A122–I685 folds into the Lipoxygenase domain. H377, H382, H555, N559, and I685 together coordinate Fe cation.

This sequence belongs to the lipoxygenase family. Monomer. Requires Fe cation as cofactor.

The protein resides in the periplasm. The catalysed reaction is (9Z,12Z)-octadecadienoate + O2 = (9S)-hydroperoxy-(10E,12Z)-octadecadienoate. It carries out the reaction (9Z)-octadecenoate + O2 = (8E,10S)-10-hydroperoxy-octadeca-8-enoate. The enzyme catalyses (9Z,12Z)-octadecadienoate + O2 = (8E,10S,12Z)-10-hydroperoxyoctadeca-8,12-dienoate. It catalyses the reaction (9Z,12Z,15Z)-octadecatrienoate + O2 = (8E,10S,12Z,15Z)-10-hydroperoxyoctadeca-8,12,15-trienoate. The catalysed reaction is (9Z,12Z)-octadecadienoate + O2 = (13S)-hydroperoxy-(9Z,11E)-octadecadienoate. It carries out the reaction (9Z,12Z,15Z)-octadecatrienoate + O2 = (13S)-hydroperoxy-(9Z,11E,15Z)-octadecatrienoate. Inhibited by Ba(2+), Zn(2+) and Fe(3+). In terms of biological role, in presence of oxygen, converts linoleate into (9S)-hydroperoxy-10,12-octadecenoate (9HPOD), which spontaneously decomposes to the corresponding 9-hydroxy-10,12-octadecenoate (9HOD), and into 13-hydroperoxy-9,11-octadecenoate (13HPOD) which spontaneously decomposes to the corresponding 13-hydroxy-9,11-octadecenoate (13HOD). Also active on linolenate. To a lesser extent, is also able to convert oleate into (10S)-hydroperoxy-8E-octadecenoate, which spontaneously decomposes to the corresponding 10-hydroxy-8E-octadecenoate. Is almost not active on arachidonate. This chain is Linoleate 9/13-lipoxygenase (lox), found in Pseudomonas aeruginosa.